A 51-amino-acid chain; its full sequence is Insulin (51 aa).

3 cysteine pairs are disulfide-bonded: cysteine 8–cysteine 37, cysteine 20–cysteine 50, and cysteine 36–cysteine 41.

It belongs to the insulin family. As to quaternary structure, heterodimer of a B chain and an A chain linked by two disulfide bonds.

It localises to the secreted. Its function is as follows. Insulin decreases blood glucose concentration. It increases cell permeability to monosaccharides, amino acids and fatty acids. It accelerates glycolysis, the pentose phosphate cycle, and glycogen synthesis in liver. The polypeptide is Insulin (Pagrus major (Red sea bream)).